A 129-amino-acid chain; its full sequence is Small ribosomal subunit protein uS11 (129 aa).

It belongs to the universal ribosomal protein uS11 family. Part of the 30S ribosomal subunit. Interacts with proteins S7 and S18. Binds to IF-3.

Located on the platform of the 30S subunit, it bridges several disparate RNA helices of the 16S rRNA. Forms part of the Shine-Dalgarno cleft in the 70S ribosome. In Desulforamulus reducens (strain ATCC BAA-1160 / DSM 100696 / MI-1) (Desulfotomaculum reducens), this protein is Small ribosomal subunit protein uS11.